The chain runs to 252 residues: Endonuclease NucS (252 aa).

The protein belongs to the NucS endonuclease family.

The protein localises to the cytoplasm. Cleaves both 3' and 5' ssDNA extremities of branched DNA structures. In Thermococcus kodakarensis (strain ATCC BAA-918 / JCM 12380 / KOD1) (Pyrococcus kodakaraensis (strain KOD1)), this protein is Endonuclease NucS.